The chain runs to 512 residues: Cytochrome P450 monooxygenase adrA (512 aa).

Residues 12–32 (FEPVSLVGLVLLSGLFLLLTA) form a helical membrane-spanning segment. Residues Asn86, Asn149, and Asn210 are each glycosylated (N-linked (GlcNAc...) asparagine). Cys453 provides a ligand contact to heme.

It belongs to the cytochrome P450 family. It depends on heme as a cofactor.

It localises to the membrane. It participates in secondary metabolite biosynthesis; terpenoid biosynthesis. Functionally, cytochrome P450 monooxygenase; part of the gene cluster that mediates the biosynthesis of andrastins, meroterpenoid compounds that exhibit inhibitory activity against ras farnesyltransferase, suggesting that they could be promising leads for antitumor agents. The first step of the pathway is the synthesis of 3,5-dimethylorsellinic acid (DMOA) by the polyketide synthase adrD via condensation of one acetyl-CoA starter unit with 3 malonyl-CoA units and 2 methylations. DMAO is then converted to farnesyl-DMAO by the prenyltransferase adrG. The methyltransferase adrK catalyzes the methylation of the carboxyl group of farnesyl-DMAO to farnesyl-DMAO methyl ester which is further converted to epoxyfarnesyl-DMAO methyl ester by the FAD-dependent monooxygenase adrH. The terpene cyclase adrI then catalyzes the carbon skeletal rearrangement to generate the andrastin E, the first compound in the pathway having the andrastin scaffold, with the tetracyclic ring system. The post-cyclization tailoring enzymes adrF, adrE, adrJ, and adrA, are involved in the conversion of andrastin E into andrastin A. The short chain dehydrogenase adrF is responsible for the oxidation of the C-3 a hydroxyl group of andrastin E to yield the corresponding ketone, andrastin D. The ketoreductase adrE stereoselectively reduces the carbonyl moiety to reverse the stereochemistry of the C-3 position to yield andrastin F. The acetyltransferase adrJ is the acetyltransferase that attaches the acetyl group to the C-3 hydroxyl group of andrastin F to yield andrastin C. Finally, the cytochrome P450 monooxygenase adrA catalyzes two sequential oxidation reactions of the C-23 methyl group, to generate the corresponding alcohol andrastin B, and aldehyde andrastin A. This is Cytochrome P450 monooxygenase adrA from Penicillium rubens (strain ATCC 28089 / DSM 1075 / NRRL 1951 / Wisconsin 54-1255) (Penicillium chrysogenum).